Consider the following 288-residue polypeptide: Nucleotide-binding protein NE1849 (288 aa).

8 to 15 (GLSGSGKS) contacts ATP. 57–60 (DMRS) contributes to the GTP binding site.

It belongs to the RapZ-like family.

Functionally, displays ATPase and GTPase activities. In Nitrosomonas europaea (strain ATCC 19718 / CIP 103999 / KCTC 2705 / NBRC 14298), this protein is Nucleotide-binding protein NE1849.